The sequence spans 130 residues: Small ribosomal subunit protein uS8 (130 aa).

Belongs to the universal ribosomal protein uS8 family. As to quaternary structure, part of the 30S ribosomal subunit.

Functionally, one of the primary rRNA binding proteins, it binds directly to 16S rRNA central domain where it helps coordinate assembly of the platform of the 30S subunit. In Pyrococcus horikoshii (strain ATCC 700860 / DSM 12428 / JCM 9974 / NBRC 100139 / OT-3), this protein is Small ribosomal subunit protein uS8.